Here is a 731-residue protein sequence, read N- to C-terminus: 1,4-alpha-glucan branching enzyme GlgB (731 aa).

Aspartate 411 serves as the catalytic Nucleophile. Glutamate 464 acts as the Proton donor in catalysis.

It belongs to the glycosyl hydrolase 13 family. GlgB subfamily. As to quaternary structure, monomer.

It carries out the reaction Transfers a segment of a (1-&gt;4)-alpha-D-glucan chain to a primary hydroxy group in a similar glucan chain.. Its pathway is glycan biosynthesis; glycogen biosynthesis. Catalyzes the formation of the alpha-1,6-glucosidic linkages in glycogen by scission of a 1,4-alpha-linked oligosaccharide from growing alpha-1,4-glucan chains and the subsequent attachment of the oligosaccharide to the alpha-1,6 position. This is 1,4-alpha-glucan branching enzyme GlgB from Mycolicibacterium paratuberculosis (strain ATCC BAA-968 / K-10) (Mycobacterium paratuberculosis).